The following is a 185-amino-acid chain: Ribosome-recycling factor (185 aa).

Positions 138-160 are disordered; sequence AMDKAVKDGEVGEDEGARGEKEL.

Belongs to the RRF family.

Its subcellular location is the cytoplasm. In terms of biological role, responsible for the release of ribosomes from messenger RNA at the termination of protein biosynthesis. May increase the efficiency of translation by recycling ribosomes from one round of translation to another. In Micrococcus luteus (strain ATCC 4698 / DSM 20030 / JCM 1464 / CCM 169 / CCUG 5858 / IAM 1056 / NBRC 3333 / NCIMB 9278 / NCTC 2665 / VKM Ac-2230) (Micrococcus lysodeikticus), this protein is Ribosome-recycling factor.